The chain runs to 331 residues: Anthranilate phosphoribosyltransferase (331 aa).

Residues G78, 81–82 (GD), T86, 88–91 (NVST), 106–114 (KHGNYSVSS), and S118 each bind 5-phospho-alpha-D-ribose 1-diphosphate. Residue G78 participates in anthranilate binding. Residue S90 coordinates Mg(2+). N109 is an anthranilate binding site. R164 is an anthranilate binding site. The Mg(2+) site is built by D222 and E223.

The protein belongs to the anthranilate phosphoribosyltransferase family. As to quaternary structure, homodimer. Mg(2+) is required as a cofactor.

It carries out the reaction N-(5-phospho-beta-D-ribosyl)anthranilate + diphosphate = 5-phospho-alpha-D-ribose 1-diphosphate + anthranilate. Its pathway is amino-acid biosynthesis; L-tryptophan biosynthesis; L-tryptophan from chorismate: step 2/5. In terms of biological role, catalyzes the transfer of the phosphoribosyl group of 5-phosphorylribose-1-pyrophosphate (PRPP) to anthranilate to yield N-(5'-phosphoribosyl)-anthranilate (PRA). The protein is Anthranilate phosphoribosyltransferase of Haloferax volcanii (strain ATCC 29605 / DSM 3757 / JCM 8879 / NBRC 14742 / NCIMB 2012 / VKM B-1768 / DS2) (Halobacterium volcanii).